We begin with the raw amino-acid sequence, 506 residues long: 5'-3' exonuclease PLD4 (506 aa).

A helical membrane pass occupies residues 31–51; the sequence is LQVLGALAVLWLGSVALICLL. C94 and C250 are oxidised to a cystine. Residues N150 and N171 are each glycosylated (N-linked (GlcNAc...) asparagine). A PLD phosphodiesterase 1 domain is found at 209–236; the sequence is TRGVLHSKFWVVDGRHIYMGSANMDWRS. H214 (proton donor) is an active-site residue. Catalysis depends on residues K216 and D221. N-linked (GlcNAc...) asparagine glycosylation is found at N249, N281, N403, N417, and N427. A disulfide bridge connects residues C379 and C502. One can recognise a PLD phosphodiesterase 2 domain in the interval 423–449; sequence FSRVNHSKFMVTEKAAYIGTSNWSEDY. Catalysis depends on H428, which acts as the Nucleophile. A glycan (N-linked (GlcNAc...) asparagine) is linked at N444.

The protein belongs to the phospholipase D family. Homodimer. In terms of processing, highly N-glycosylated. As to expression, expressed in plasmacytoid dendritic cells and monocytes (at protein level).

It is found in the endoplasmic reticulum membrane. Its subcellular location is the golgi apparatus. The protein localises to the trans-Golgi network membrane. The protein resides in the nucleus. It localises to the early endosome. It is found in the cytoplasmic vesicle. Its subcellular location is the phagosome. The protein localises to the lysosome. The catalysed reaction is Exonucleolytic cleavage in the 5'- to 3'-direction to yield nucleoside 3'-phosphates.. It catalyses the reaction a 5'-end 5'-dephospho-ribonucleotidyl-ribonucleotide-RNA + H2O = a ribonucleoside 3'-phosphate + a 5'-end dephospho-ribonucleoside-RNA + H(+). It carries out the reaction a ribonucleoside 3'-phosphate-2'-3'-cyclophospho-GMP + H2O = a ribonucleoside 3'-phosphate + 2',3'-cyclophospho-GMP + H(+). The enzyme catalyses a 5'-end 5'-dephospho-2'-deoxyribonucleotidyl-2'-deoxyribonucleotide in single-stranded DNA + H2O = a 5'-end dephospho-2'-deoxyribonucleoside in single-stranded DNA + a 2'-deoxyribonucleoside 3'-phosphate + H(+). The catalysed reaction is a 5'-end 5'-phospho-2'-deoxyribonucleotide in single-stranded DNA + H2O = a 5'-end 5'-dephospho-2'-deoxyribonucleotide in single-stranded DNA + phosphate. It catalyses the reaction a 3-lyso-sn-glycero-1-phospho-(3'-acyl-1'-sn-glycerol) + a 1-acyl-sn-glycerol = a 3-acyl-sn-glycero-1-phospho-(3'-acyl-1'-sn-glycerol) + glycerol. It carries out the reaction 3-lyso-sn-glycero-1-phospho-(3'-(9Z-octadecenoyl)-1'-sn-glycerol) + 1-(9Z-octadecenoyl)-sn-glycerol = 3-(9Z-octadecenoyl)-sn-glycero-1-phospho-(3'-(9Z-octadecenoyl)-1'-sn-glycerol) + glycerol. The exonuclease activity toward ssDNA substrate is Ca(2+) and Mg(2+)-independent, but it is inhibited by Fe(2+), Cu(2+) and to a lesser extent Zn(2+) ions. Functionally, 5'-&gt;3' exonuclease that hydrolyzes the phosphodiester bond of single-stranded DNA (ssDNA) and RNA molecules to form nucleoside 3'-monophosphates and 5'-end 5'-hydroxy deoxyribonucleotide/ribonucleotide fragments. Partially redundant with PLD3, can cleave all four nucleotides displaying higher efficiency for ssDNA and RNA fragments initiated with uridine and guanosine residues and lower efficiency for cytidine-initiated substrates. As a result, it does not always degrade polynucleotides to the single nucleotide level, it can stall at specific sites sparing certain fragments from exonucleolytic degradation. Processes self and pathogenic ssDNA and RNA molecules that reach the endolysosomal compartment via phagocytosis or autophagy and may serve as 'danger' signals for recognition by innate immune receptors such as toll-like receptors (TLRs). Degrades mitochondrial CpG-rich ssDNA fragments to prevent TLR9 activation and autoinflammatory response, but it can cleave viral RNA to generate ligands for TLR7 activation and initiate antiviral immune responses. In plasmacytoid dendritic cells, it cooperates with endonuclease RNASET2 to release 2',3'-cyclic guanosine monophosphate (2',3'-cGMP), a potent stimulatory ligand for TLR7. Produces 2',3'-cGMPs and cytidine-rich RNA fragments that occupy TLR7 ligand-binding pockets and trigger a signaling-competent state. Can exert polynucleotide phosphatase activity toward 5'-phosphorylated ssDNA substrates although at a slow rate. Transphosphatidylase that catalyzes the exchange with R to S stereo-inversion of the glycerol moiety between (S,R)-lysophosphatidylglycerol (LPG) and monoacylglycerol (MAG) substrates to yield (S,S)-bis(monoacylglycero)phosphate (BMP). Can synthesize a variety of (S,S)-BMPs representing the main phospholipid constituent of lysosomal intralumenal vesicle (ILV) membranes that bind acid hydrolases for lipid degradation. Regulates the homeostasis and interorganellar communication of the endolysosomal system with an overall impact on cellular removal of dysfunctional organelles via autophagy as well as proper protein and lipid turnover. May play a role in myotube formation in response to ER stress. The protein is 5'-3' exonuclease PLD4 of Homo sapiens (Human).